A 188-amino-acid chain; its full sequence is Adenine phosphoribosyltransferase (188 aa).

The protein belongs to the purine/pyrimidine phosphoribosyltransferase family. As to quaternary structure, homodimer.

The protein localises to the cytoplasm. The catalysed reaction is AMP + diphosphate = 5-phospho-alpha-D-ribose 1-diphosphate + adenine. It participates in purine metabolism; AMP biosynthesis via salvage pathway; AMP from adenine: step 1/1. Functionally, catalyzes a salvage reaction resulting in the formation of AMP, that is energically less costly than de novo synthesis. The protein is Adenine phosphoribosyltransferase of Burkholderia thailandensis (strain ATCC 700388 / DSM 13276 / CCUG 48851 / CIP 106301 / E264).